A 561-amino-acid polypeptide reads, in one-letter code: Melanopsin-A (561 aa).

Residues 1-34 are Extracellular-facing; that stretch reads MRPSTDTMEADTAATHRNFITKVDVPDHAHYTVA. Residues 35–55 form a helical membrane-spanning segment; the sequence is FFVSVIGTLGVTGNALVQFAF. The Cytoplasmic segment spans residues 56–68; the sequence is YSNKKLRNLPNYF. Residues 69-89 traverse the membrane as a helical segment; it reads IMNQAASDFLMAFTQSPFFFI. The Extracellular portion of the chain corresponds to 90–104; the sequence is NCLNREWIFGELGCK. A disulfide bridge links cysteine 103 with cysteine 181. Residues 105–125 form a helical membrane-spanning segment; sequence LYAFLGALFGITSMINLLAIS. Topologically, residues 126–148 are cytoplasmic; it reads LDRYMVITRPLEAMKWNSKRRTT. A helical membrane pass occupies residues 149-169; that stretch reads IAILLVWLYSLAWSLAPLVGW. The Extracellular segment spans residues 170 to 201; it reads SSYIPEGLRTSCTWDYVTYTASNRSYTMMLCC. N-linked (GlcNAc...) asparagine glycosylation is present at asparagine 192. The helical transmembrane segment at 202 to 222 threads the bilayer; that stretch reads FVFFIPLAIISYCYLFMFLAI. Residues 223–255 are Cytoplasmic-facing; sequence RKTSRDVERLGIQVRKSTIIRQKSIRTEWKLAK. The helical transmembrane segment at 256 to 276 threads the bilayer; sequence IAFVVIVVYVLSWSPYACVTM. At 277 to 291 the chain is on the extracellular side; that stretch reads ISWSGHANILSPYSK. Residues 292-312 form a helical membrane-spanning segment; the sequence is TVPAVIAKASTIYNPFIYAII. N6-(retinylidene)lysine is present on lysine 299. Residues 313 to 561 are Cytoplasmic-facing; that stretch reads HQKYRKTLAD…EDSLEDNDVV (249 aa). Disordered regions lie at residues 359–385, 404–448, 479–503, and 539–561; these read AIRR…SYSS, ASFR…SATH, NGLS…SKSA, and SFTD…NDVV. Positions 371–385 are enriched in low complexity; it reads ASASKTAAGASSYSS. The span at 550-561 shows a compositional bias: acidic residues; that stretch reads VDEDSLEDNDVV.

It belongs to the G-protein coupled receptor 1 family. Opsin subfamily. As to expression, expressed in retina and brain. Expressed in a subset of retinal horizontal cells as well as a small number of amacrine and retinal ganglion cells. Also expressed in a small population of neurons in the suprachiasmatic nucleus (SNC).

It localises to the cell membrane. Functionally, photoreceptor implicated in non-image-forming responses to light. In Gadus morhua (Atlantic cod), this protein is Melanopsin-A (opn4a).